A 1059-amino-acid chain; its full sequence is Mitogen-activated protein kinase kinase kinase mlk-1 (1059 aa).

Positions 1-66 are disordered; the sequence is MEQASVPSYV…ESSQVSRESP (66 aa). The span at 38–48 shows a compositional bias: low complexity; that stretch reads DTTTASTSTDS. Residues 69 to 130 form the SH3 domain; it reads RASKAFVASY…PSNYAREVTY (62 aa). Residues 150–454 form the Protein kinase domain; the sequence is TLSDCQIGHG…TLAISFKQYA (305 aa). Residues 156–164 and K193 contribute to the ATP site; that span reads IGHGATATV. Residues 199–224 adopt a coiled-coil conformation; the sequence is ASNFRADVVSTDEQLEQLKREANLVN. The active-site Proton acceptor is the D297. At S355 the chain carries Phosphoserine; by max-2 and tpa-1. 2 disordered regions span residues 617–699 and 714–808; these read PVVS…QTTR and RAQS…SSSD. Polar residues predominate over residues 623-633; the sequence is MDDSNTFSTID. Composition is skewed to basic and acidic residues over residues 639-648 and 662-674; these read DPNHSKESKK and NKRD…DERA. Positions 678–689 are enriched in low complexity; the sequence is SISSRSSSTTSS. Residues 690 to 699 show a composition bias toward polar residues; sequence NRLITGQTTR. Residues 749–759 show a composition bias toward basic and acidic residues; sequence RYVKDLEKDTP. 2 stretches are compositionally biased toward polar residues: residues 774–790 and 798–808; these read LDQT…SINN and SRRTTANSSSD. The NPQY motif signature appears at 937 to 940; the sequence is NPQY. A Phosphotyrosine modification is found at Y940.

It belongs to the protein kinase superfamily. STE Ser/Thr protein kinase family. MAP kinase kinase kinase subfamily. Interacts with max-2; the interaction is independent of max-2 and mlk-1 kinase activities. May interact (via NPQY motif when phosphorylated on tyrosine residue) with shc-1 (via PID domain); the interaction may facilitate mek-1 phosphorylation by bringing mlk-1 and mek-1 together. Interacts with svh-2 (via cytoplasmic domain). Interacts with tpa-1. It depends on Mg(2+) as a cofactor. Post-translationally, may be phosphorylated on tyrosine residues by svh-2. In terms of processing, may be ubiquitinated and targeted for proteasomal degradation by E3 ubiquitin ligase rpm-1. Expressed in pharynx, intestine, hypodermis, neurons and body muscles.

It catalyses the reaction L-seryl-[protein] + ATP = O-phospho-L-seryl-[protein] + ADP + H(+). The catalysed reaction is L-threonyl-[protein] + ATP = O-phospho-L-threonyl-[protein] + ADP + H(+). Activated by phosphorylation at Ser-355. May be activated by svh-2-mediated phosphorylation. In terms of biological role, serine/threonine-protein kinase which, by phosphorylating and activating mek-1, plays an important role in the activation of the JNK pathway composed of mlk-1, mek-1 and kgb-1. Involved in the response to environmental stress such as heavy metals. By activating the JNK pathway downstream of tyrosine receptor svh-2, plays a role in axon regeneration after injury. This chain is Mitogen-activated protein kinase kinase kinase mlk-1, found in Caenorhabditis elegans.